Reading from the N-terminus, the 341-residue chain is Shk1 kinase-binding protein 15 (341 aa).

5 WD repeats span residues 33–70 (AHEGALTALAVDGIYLASTSSDETIKIFDHTRNVQIAD), 77–114 (IANACIRDMCFTKNHLLACHDNGQISMWSKGSWLLVHT), 119–157 (SHKGITGIAVHPSEKLALTVGGDGKLRLWDLVRGKGGKV), 197–234 (SSKSQLNALCLYQSKLIVGRDNGTVLVLDTSDGKILHE), and 237–274 (AHKKRVKSVYPVDDYLITASSDGSVCIWDKDWNLVIEH). Residues 293-341 (NSEPKNVEDEAAKRQSLDSETSETSSESESESEYYSTSKQPPVKRTKHA) form a disordered region. Basic and acidic residues predominate over residues 297-309 (KNVEDEAAKRQSL).

In terms of biological role, negatively regulates pak1/shk1 kinase activity leading to proper execution of cytoskeletal remodeling and cytokinetic functions. Its function is as follows. Interacts with pak1/shk1. The polypeptide is Shk1 kinase-binding protein 15 (skb15) (Schizosaccharomyces pombe (strain 972 / ATCC 24843) (Fission yeast)).